The following is a 60-amino-acid chain: Small, acid-soluble spore protein H 2 (60 aa).

The disordered stretch occupies residues 38-60 (TIHPLDNPSQKQSVPVASLEEHS).

The protein belongs to the SspH family.

It is found in the spore core. The chain is Small, acid-soluble spore protein H 2 from Geobacillus thermodenitrificans (strain NG80-2).